We begin with the raw amino-acid sequence, 429 residues long: MFADSAKIFIRSGKGGDGHVSFRREIFVPAGGPDGGDGGKGGNVIFEVDEGLNTLGDFRLKRKYSAGDGENGQKKRCSGKDGEDLIIKVPEGTIIKETETGKVITDMSHENRREVILRGGRGGKGNQHYATPTMQVPKYAQPGQKAMELNVTLELKVIADVGLVGFPNVGKSTLLSRVTNAKPKIANYHFTTLNPNLGVVDLDGADGFVIADIPGLIEGASEGIGLGHEFLKHIERTRVIIHLVDAASTEGRDPVEDIEKINHELSSYNEGLLLKPQVIAANKTDVLYGEEEEEAINKIKEAFESKGIKVFPISAVSGQGVKELLYYVSDLLKTVDATPIVFEKEYFPEENLVMSEPYTVEYNETEEVYVVEGPRIERMLGYTNIDTEKGFEFFQKFLKENGILDQLEELGIGEGDTVRMYGLEFDYYK.

Residues 1–158 form the Obg domain; the sequence is MFADSAKIFI…LNVTLELKVI (158 aa). The 175-residue stretch at 159–333 folds into the OBG-type G domain; it reads ADVGLVGFPN…LLYYVSDLLK (175 aa). GTP is bound by residues 165 to 172, 190 to 194, 212 to 215, 282 to 285, and 314 to 316; these read GFPNVGKS, FTTLN, DIPG, NKTD, and SAV. 2 residues coordinate Mg(2+): S172 and T192. In terms of domain architecture, OCT spans 350-429; it reads ENLVMSEPYT…MYGLEFDYYK (80 aa).

It belongs to the TRAFAC class OBG-HflX-like GTPase superfamily. OBG GTPase family. In terms of assembly, monomer. Requires Mg(2+) as cofactor.

It is found in the cytoplasm. In terms of biological role, an essential GTPase which binds GTP, GDP and possibly (p)ppGpp with moderate affinity, with high nucleotide exchange rates and a fairly low GTP hydrolysis rate. Plays a role in control of the cell cycle, stress response, ribosome biogenesis and in those bacteria that undergo differentiation, in morphogenesis control. This Lachnoclostridium phytofermentans (strain ATCC 700394 / DSM 18823 / ISDg) (Clostridium phytofermentans) protein is GTPase Obg.